Reading from the N-terminus, the 419-residue chain is S-adenosylmethionine synthase (419 aa).

ATP is bound at residue His14. Asp16 is a Mg(2+) binding site. Glu42 is a binding site for K(+). L-methionine-binding residues include Glu55 and Gln98. A flexible loop region spans residues 98–108 (QSADINQGVDR). Residues 164–166 (DAK), 242–243 (KF), Asp251, 257–258 (RK), Ala274, and Lys278 contribute to the ATP site. Position 251 (Asp251) interacts with L-methionine. Lys282 is a binding site for L-methionine.

It belongs to the AdoMet synthase family. In terms of assembly, homotetramer; dimer of dimers. The cofactor is Mg(2+). It depends on K(+) as a cofactor.

It localises to the cytoplasm. It carries out the reaction L-methionine + ATP + H2O = S-adenosyl-L-methionine + phosphate + diphosphate. It functions in the pathway amino-acid biosynthesis; S-adenosyl-L-methionine biosynthesis; S-adenosyl-L-methionine from L-methionine: step 1/1. Catalyzes the formation of S-adenosylmethionine (AdoMet) from methionine and ATP. The overall synthetic reaction is composed of two sequential steps, AdoMet formation and the subsequent tripolyphosphate hydrolysis which occurs prior to release of AdoMet from the enzyme. In Cytophaga hutchinsonii (strain ATCC 33406 / DSM 1761 / CIP 103989 / NBRC 15051 / NCIMB 9469 / D465), this protein is S-adenosylmethionine synthase.